The sequence spans 283 residues: MIRWLTLSSRHRAAARRGWLSAHKWWLLRRCCQIAALAAFMSGPLAGYWIMRGNFASSEMLGVLGLSDPYILLQSAFAGWPVAAPALVGALLIGLFYLLVGGRVYCSFVCPVNIVTDTAHWLREKTGLTRDRKLDRRTRLWLLLGTLLAAALTGTIAWEYVNPVSMMQRGLIFGAGLGWSIVLLVFLLDLFVSRRAWCSHLCPVGAFYGLVGRFSLVRVSARNRDACDNCGACFSTCPEPHVIVPALKGEGSPLILSGDCINCGGCIDSCPNRVFAMASRLRP.

2 4Fe-4S ferredoxin-type domains span residues 217–248 and 251–280; these read VRVSARNRDACDNCGACFSTCPEPHVIVPALK and GSPLILSGDCINCGGCIDSCPNRVFAMASR. Residues Cys227, Cys230, Cys233, Cys237, Cys260, Cys263, Cys266, and Cys270 each coordinate [4Fe-4S] cluster.

It functions in the pathway one-carbon metabolism; methylamine degradation. Involved in electron transfer. This chain is Methylamine utilization ferredoxin-type protein MauN (mauN), found in Paracoccus denitrificans (strain Pd 1222).